The following is a 387-amino-acid chain: Major outer membrane protein P.IA (387 aa).

Positions 1 to 19 are cleaved as a signal peptide; sequence MRKKLTALVLSALPLAAVA.

It belongs to the Gram-negative porin family. As to quaternary structure, homotrimer.

It localises to the cell outer membrane. In terms of biological role, serves as a slightly cation selective porin. Major antigen on the gonococcal cell surface and it may have pathogenic properties in addition to its porin activity. This is Major outer membrane protein P.IA (porA) from Neisseria meningitidis serogroup C.